We begin with the raw amino-acid sequence, 173 residues long: 6,7-dimethyl-8-ribityllumazine synthase (173 aa).

5-amino-6-(D-ribitylamino)uracil-binding positions include Tyr34, 65–67 (ALE), and 94–96 (CVI). 99-100 (ET) serves as a coordination point for (2S)-2-hydroxy-3-oxobutyl phosphate. The Proton donor role is filled by His102. Residue Asn127 coordinates 5-amino-6-(D-ribitylamino)uracil. (2S)-2-hydroxy-3-oxobutyl phosphate is bound at residue Arg141.

It belongs to the DMRL synthase family.

It catalyses the reaction (2S)-2-hydroxy-3-oxobutyl phosphate + 5-amino-6-(D-ribitylamino)uracil = 6,7-dimethyl-8-(1-D-ribityl)lumazine + phosphate + 2 H2O + H(+). It participates in cofactor biosynthesis; riboflavin biosynthesis; riboflavin from 2-hydroxy-3-oxobutyl phosphate and 5-amino-6-(D-ribitylamino)uracil: step 1/2. Functionally, catalyzes the formation of 6,7-dimethyl-8-ribityllumazine by condensation of 5-amino-6-(D-ribitylamino)uracil with 3,4-dihydroxy-2-butanone 4-phosphate. This is the penultimate step in the biosynthesis of riboflavin. The sequence is that of 6,7-dimethyl-8-ribityllumazine synthase from Methylorubrum extorquens (strain CM4 / NCIMB 13688) (Methylobacterium extorquens).